Here is a 336-residue protein sequence, read N- to C-terminus: Fructose-1,6-bisphosphatase class 1 (336 aa).

Positions 90, 112, 114, and 115 each coordinate Mg(2+). Substrate contacts are provided by residues 115 to 118, Asn211, and Lys277; that span reads DGSS. Glu283 is a Mg(2+) binding site.

It belongs to the FBPase class 1 family. In terms of assembly, homotetramer. Mg(2+) is required as a cofactor.

The protein localises to the cytoplasm. The enzyme catalyses beta-D-fructose 1,6-bisphosphate + H2O = beta-D-fructose 6-phosphate + phosphate. It functions in the pathway carbohydrate biosynthesis; gluconeogenesis. This Pseudomonas fluorescens (strain Pf0-1) protein is Fructose-1,6-bisphosphatase class 1.